We begin with the raw amino-acid sequence, 460 residues long: T-box transcription factor TBX1 (460 aa).

Disordered regions lie at residues 30 to 53 and 67 to 99; these read LNTP…ESQF and GSNS…TLVK. The span at 67 to 84 shows a compositional bias: polar residues; that stretch reads GSNSAQAPAQGDSGTSNC. Positions 116 to 294 form a DNA-binding region, T-box; it reads LWDEFNQLGT…SNPFAKGFRD (179 aa). Disordered stretches follow at residues 317–355 and 376–400; these read RTRN…DPTH and PLTA…PDTL. Residues 320–330 are compositionally biased toward polar residues; that stretch reads NPMSSPPQQNG. The span at 331-344 shows a compositional bias: basic and acidic residues; the sequence is TEKEDSRREYDRDP. The Nuclear localization signal motif lies at 418–429; sequence KTRPSPYPSPSI.

As to quaternary structure, binds DNA as a dimer. Expressed in the ear and mesendodermal components of pharyngeal arches.

It is found in the nucleus. Its function is as follows. Probable transcriptional regulator involved in developmental processes. Binds to the palindromic T site 5'-TTCACACCTAGGTGTGAA-3' DNA sequence. Is required for normal development of the pharyngeal arch arteries. Acts cell autonomously in the pharyngeal mesendoderm and influences the development of neural crest-derived cartilages secondarily. The polypeptide is T-box transcription factor TBX1 (tbx1) (Danio rerio (Zebrafish)).